A 125-amino-acid chain; its full sequence is Fluoride-specific ion channel FluC (125 aa).

4 helical membrane-spanning segments follow: residues 4-24 (WLFV…ISEL), 35-55 (YGTL…FALI), 69-89 (LMVG…DTVV), and 103-123 (MGLN…LVAS). Residues Gly-75 and Thr-78 each contribute to the Na(+) site.

This sequence belongs to the fluoride channel Fluc/FEX (TC 1.A.43) family.

The protein localises to the cell inner membrane. It catalyses the reaction fluoride(in) = fluoride(out). Its activity is regulated as follows. Na(+) is not transported, but it plays an essential structural role and its presence is essential for fluoride channel function. Functionally, fluoride-specific ion channel. Important for reducing fluoride concentration in the cell, thus reducing its toxicity. In Aeromonas salmonicida (strain A449), this protein is Fluoride-specific ion channel FluC.